The sequence spans 228 residues: HTH-type transcriptional regulator ArcR (228 aa).

Residue 22–141 (SYINIPVGVL…VKLFSLLSET (120 aa)) participates in a nucleoside 3',5'-cyclic phosphate binding. The HTH crp-type domain maps to 155–228 (KLAKERVTKI…SKNWLVSKDL (74 aa)). The segment at residues 188–207 (IQLLSDMAGISRETTSHIIN) is a DNA-binding region (H-T-H motif).

The protein localises to the cytoplasm. Positively regulates the expression of the arcABDCR operon under anaerobic conditions, thus playing an essential role in arginine catabolism. May also control the expression of genes encoding proteins which are involved in anaerobic metabolism. Can bind cyclic AMP. The chain is HTH-type transcriptional regulator ArcR (arcR) from Staphylococcus epidermidis (strain ATCC 35984 / DSM 28319 / BCRC 17069 / CCUG 31568 / BM 3577 / RP62A).